A 336-amino-acid chain; its full sequence is Large ribosomal subunit protein uL3 (336 aa).

A disordered region spans residues 1-34 (MVRHHQPRKGSVAFSPRKRAAKETPRIKSWPQND).

It belongs to the universal ribosomal protein uL3 family. As to quaternary structure, part of the 50S ribosomal subunit. Forms a cluster with proteins L14 and L24e.

Functionally, one of the primary rRNA binding proteins, it binds directly near the 3'-end of the 23S rRNA, where it nucleates assembly of the 50S subunit. The chain is Large ribosomal subunit protein uL3 from Methanobrevibacter smithii (strain ATCC 35061 / DSM 861 / OCM 144 / PS).